Reading from the N-terminus, the 208-residue chain is Thymidylate kinase (208 aa).

10 to 17 provides a ligand contact to ATP; sequence GIDGCGKT.

It belongs to the thymidylate kinase family.

The catalysed reaction is dTMP + ATP = dTDP + ADP. Phosphorylation of dTMP to form dTDP in both de novo and salvage pathways of dTTP synthesis. This Caldanaerobacter subterraneus subsp. tengcongensis (strain DSM 15242 / JCM 11007 / NBRC 100824 / MB4) (Thermoanaerobacter tengcongensis) protein is Thymidylate kinase.